A 469-amino-acid polypeptide reads, in one-letter code: Proline--tRNA ligase (469 aa).

The protein belongs to the class-II aminoacyl-tRNA synthetase family. ProS type 3 subfamily. Homodimer.

The protein localises to the cytoplasm. The catalysed reaction is tRNA(Pro) + L-proline + ATP = L-prolyl-tRNA(Pro) + AMP + diphosphate. Catalyzes the attachment of proline to tRNA(Pro) in a two-step reaction: proline is first activated by ATP to form Pro-AMP and then transferred to the acceptor end of tRNA(Pro). The protein is Proline--tRNA ligase of Methanosphaera stadtmanae (strain ATCC 43021 / DSM 3091 / JCM 11832 / MCB-3).